The chain runs to 473 residues: Photosystem II CP43 reaction center protein (473 aa).

A propeptide spanning residues 1-14 (MKILYSLRRFYHVE) is cleaved from the precursor. N-acetylthreonine is present on T15. Residue T15 is modified to Phosphothreonine. A run of 5 helical transmembrane segments spans residues 69–93 (LFEV…PHLA), 134–155 (LLGP…KDRN), 178–200 (KALY…RKIT), 255–275 (KPFA…LSYS), and 291–312 (WFNN…ASQA). E367 serves as a coordination point for [CaMn4O5] cluster. Residues 447-471 (RARAAAAGFEKGIDRDLEPVLYMNP) traverse the membrane as a helical segment.

Belongs to the PsbB/PsbC family. PsbC subfamily. PSII is composed of 1 copy each of membrane proteins PsbA, PsbB, PsbC, PsbD, PsbE, PsbF, PsbH, PsbI, PsbJ, PsbK, PsbL, PsbM, PsbT, PsbX, PsbY, PsbZ, Psb30/Ycf12, at least 3 peripheral proteins of the oxygen-evolving complex and a large number of cofactors. It forms dimeric complexes. Binds multiple chlorophylls and provides some of the ligands for the Ca-4Mn-5O cluster of the oxygen-evolving complex. It may also provide a ligand for a Cl- that is required for oxygen evolution. PSII binds additional chlorophylls, carotenoids and specific lipids. serves as cofactor. In terms of processing, phosphorylated on threonine residue(s); phosphorylation increases with increasing light levels.

It is found in the plastid. The protein resides in the chloroplast thylakoid membrane. Its function is as follows. One of the components of the core complex of photosystem II (PSII). It binds chlorophyll and helps catalyze the primary light-induced photochemical processes of PSII. PSII is a light-driven water:plastoquinone oxidoreductase, using light energy to abstract electrons from H(2)O, generating O(2) and a proton gradient subsequently used for ATP formation. The polypeptide is Photosystem II CP43 reaction center protein (Secale cereale (Rye)).